Here is a 1042-residue protein sequence, read N- to C-terminus: Probable inorganic carbon transporter subunit DabA (1042 aa).

Positions 462, 464, 721, and 736 each coordinate Zn(2+).

It belongs to the inorganic carbon transporter (TC 9.A.2) DabA family. As to quaternary structure, forms a complex with DabB. Zn(2+) is required as a cofactor.

The protein resides in the cell inner membrane. Its function is as follows. Part of an energy-coupled inorganic carbon pump. This is Probable inorganic carbon transporter subunit DabA from Nitrosomonas eutropha (strain DSM 101675 / C91 / Nm57).